Here is a 217-residue protein sequence, read N- to C-terminus: MSIGLIGRKCGMTRIFTETGSSIPVTVVEVIPNRITQVKTVETDGYRAFQVAYGKKSSARVNKPLAGHYSKAAVEAGNALREFRLGNEELTEAKAGDELKVDIFKEGQVVDVRGLTRGKGFAGTVKHHNFRTQDATHGNSLSHRAPGSIGQCQTPGRVWKGKKMAGQLGNVYCTVQSQEIIKVDVERNLLLIKGALPGAPGGEVIITQSSKKRKEDK.

The tract at residues 134–154 (DATHGNSLSHRAPGSIGQCQT) is disordered. Residue glutamine 153 is modified to N5-methylglutamine.

Belongs to the universal ribosomal protein uL3 family. Part of the 50S ribosomal subunit. Forms a cluster with proteins L14 and L19. In terms of processing, methylated by PrmB.

Functionally, one of the primary rRNA binding proteins, it binds directly near the 3'-end of the 23S rRNA, where it nucleates assembly of the 50S subunit. The polypeptide is Large ribosomal subunit protein uL3 (Coxiella burnetii (strain Dugway 5J108-111)).